The chain runs to 382 residues: Lipid-A-disaccharide synthase (382 aa).

This sequence belongs to the LpxB family.

The catalysed reaction is 2-N,3-O-bis[(3R)-3-hydroxytetradecanoyl]-alpha-D-glucosaminyl 1-phosphate + UDP-2-N,3-O-bis[(3R)-3-hydroxytetradecanoyl]-alpha-D-glucosamine = lipid A disaccharide (E. coli) + UDP + H(+). The enzyme catalyses a lipid X + a UDP-2-N,3-O-bis[(3R)-3-hydroxyacyl]-alpha-D-glucosamine = a lipid A disaccharide + UDP + H(+). It functions in the pathway glycolipid biosynthesis; lipid IV(A) biosynthesis; lipid IV(A) from (3R)-3-hydroxytetradecanoyl-[acyl-carrier-protein] and UDP-N-acetyl-alpha-D-glucosamine: step 5/6. Functionally, condensation of UDP-2,3-diacylglucosamine and 2,3-diacylglucosamine-1-phosphate to form lipid A disaccharide, a precursor of lipid A, a phosphorylated glycolipid that anchors the lipopolysaccharide to the outer membrane of the cell. This chain is Lipid-A-disaccharide synthase, found in Salmonella agona (strain SL483).